A 209-amino-acid polypeptide reads, in one-letter code: Large ribosomal subunit protein uL3 (209 aa).

Positions 127–153 are disordered; the sequence is NASRGPMSHGSKFHRAPGSMGAASDPS.

Belongs to the universal ribosomal protein uL3 family. As to quaternary structure, part of the 50S ribosomal subunit. Forms a cluster with proteins L14 and L19.

Functionally, one of the primary rRNA binding proteins, it binds directly near the 3'-end of the 23S rRNA, where it nucleates assembly of the 50S subunit. The polypeptide is Large ribosomal subunit protein uL3 (Clostridium perfringens (strain SM101 / Type A)).